The following is a 94-amino-acid chain: Aspartyl/glutamyl-tRNA(Asn/Gln) amidotransferase subunit C (94 aa).

It belongs to the GatC family. In terms of assembly, heterotrimer of A, B and C subunits.

The enzyme catalyses L-glutamyl-tRNA(Gln) + L-glutamine + ATP + H2O = L-glutaminyl-tRNA(Gln) + L-glutamate + ADP + phosphate + H(+). The catalysed reaction is L-aspartyl-tRNA(Asn) + L-glutamine + ATP + H2O = L-asparaginyl-tRNA(Asn) + L-glutamate + ADP + phosphate + 2 H(+). Its function is as follows. Allows the formation of correctly charged Asn-tRNA(Asn) or Gln-tRNA(Gln) through the transamidation of misacylated Asp-tRNA(Asn) or Glu-tRNA(Gln) in organisms which lack either or both of asparaginyl-tRNA or glutaminyl-tRNA synthetases. The reaction takes place in the presence of glutamine and ATP through an activated phospho-Asp-tRNA(Asn) or phospho-Glu-tRNA(Gln). The chain is Aspartyl/glutamyl-tRNA(Asn/Gln) amidotransferase subunit C from Heliobacterium modesticaldum (strain ATCC 51547 / Ice1).